The sequence spans 260 residues: Snake venom serine protease homolog (260 aa).

Residues 1 to 18 (MVLVRVLANLLMLQLSYA) form the signal peptide. Residues 19–24 (QKSSEL) constitute a propeptide that is removed on maturation. Residues 25–251 (IIGGDECNIN…HLDWIKSIIA (227 aa)) enclose the Peptidase S1 domain. Cystine bridges form between cysteine 31/cysteine 165, cysteine 52/cysteine 68, cysteine 100/cysteine 258, cysteine 144/cysteine 212, cysteine 176/cysteine 191, and cysteine 202/cysteine 227. The Charge relay system role is filled by aspartate 112. Asparagine 123 and asparagine 124 each carry an N-linked (GlcNAc...) asparagine glycan. Serine 206 (charge relay system) is an active-site residue.

Belongs to the peptidase S1 family. Snake venom subfamily. As to expression, expressed by the venom gland.

The protein resides in the secreted. Snake venom serine protease homolog. May act in the hemostasis system of the prey. This is Snake venom serine protease homolog from Protobothrops jerdonii (Jerdon's pitviper).